The primary structure comprises 340 residues: Ketol-acid reductoisomerase (NADP(+)) (340 aa).

Positions 3-182 constitute a KARI N-terminal Rossmann domain; that stretch reads VTMYYEEDVE…GCARVGIIET (180 aa). NADP(+) is bound by residues 26-29, arginine 49, serine 53, and 83-86; these read YGSQ and DELQ. The active site involves histidine 108. Glycine 134 lines the NADP(+) pocket. A KARI C-terminal knotted domain is found at 183–328; that stretch reads TFKEETEEDL…AELRKAMPFT (146 aa). Mg(2+) contacts are provided by aspartate 191, glutamate 195, glutamate 227, and glutamate 231. Serine 252 provides a ligand contact to substrate.

The protein belongs to the ketol-acid reductoisomerase family. The cofactor is Mg(2+).

It carries out the reaction (2R)-2,3-dihydroxy-3-methylbutanoate + NADP(+) = (2S)-2-acetolactate + NADPH + H(+). The enzyme catalyses (2R,3R)-2,3-dihydroxy-3-methylpentanoate + NADP(+) = (S)-2-ethyl-2-hydroxy-3-oxobutanoate + NADPH + H(+). Its pathway is amino-acid biosynthesis; L-isoleucine biosynthesis; L-isoleucine from 2-oxobutanoate: step 2/4. The protein operates within amino-acid biosynthesis; L-valine biosynthesis; L-valine from pyruvate: step 2/4. Involved in the biosynthesis of branched-chain amino acids (BCAA). Catalyzes an alkyl-migration followed by a ketol-acid reduction of (S)-2-acetolactate (S2AL) to yield (R)-2,3-dihydroxy-isovalerate. In the isomerase reaction, S2AL is rearranged via a Mg-dependent methyl migration to produce 3-hydroxy-3-methyl-2-ketobutyrate (HMKB). In the reductase reaction, this 2-ketoacid undergoes a metal-dependent reduction by NADPH to yield (R)-2,3-dihydroxy-isovalerate. In Lactococcus lactis subsp. cremoris (strain MG1363), this protein is Ketol-acid reductoisomerase (NADP(+)).